We begin with the raw amino-acid sequence, 486 residues long: Small ribosomal subunit protein uS4m (486 aa).

The region spanning Lys103–Leu172 is the S4 RNA-binding domain.

This sequence belongs to the universal ribosomal protein uS4 family. As to quaternary structure, component of the mitochondrial small ribosomal subunit (mt-SSU). Mature yeast 74S mitochondrial ribosomes consist of a small (37S) and a large (54S) subunit. The 37S small subunit contains a 15S ribosomal RNA (15S mt-rRNA) and 34 different proteins. The 54S large subunit contains a 21S rRNA (21S mt-rRNA) and 46 different proteins. uS3m, uS4m and uS5m form the narrow entry site of the mRNA channel.

The protein localises to the mitochondrion. Its function is as follows. Component of the mitochondrial ribosome (mitoribosome), a dedicated translation machinery responsible for the synthesis of mitochondrial genome-encoded proteins, including at least some of the essential transmembrane subunits of the mitochondrial respiratory chain. The mitoribosomes are attached to the mitochondrial inner membrane and translation products are cotranslationally integrated into the membrane. In Saccharomyces cerevisiae (strain ATCC 204508 / S288c) (Baker's yeast), this protein is Small ribosomal subunit protein uS4m (NAM9).